A 219-amino-acid polypeptide reads, in one-letter code: Octanoyltransferase (219 aa).

The BPL/LPL catalytic domain maps to 31-206; sequence TASADEIWLV…ECLRLMKASA (176 aa). Substrate-binding positions include 70–77, 137–139, and 150–152; these read RGGQVTFH, SLG, and GLA. The active-site Acyl-thioester intermediate is C168.

This sequence belongs to the LipB family.

The protein resides in the cytoplasm. It catalyses the reaction octanoyl-[ACP] + L-lysyl-[protein] = N(6)-octanoyl-L-lysyl-[protein] + holo-[ACP] + H(+). It participates in protein modification; protein lipoylation via endogenous pathway; protein N(6)-(lipoyl)lysine from octanoyl-[acyl-carrier-protein]: step 1/2. Functionally, catalyzes the transfer of endogenously produced octanoic acid from octanoyl-acyl-carrier-protein onto the lipoyl domains of lipoate-dependent enzymes. Lipoyl-ACP can also act as a substrate although octanoyl-ACP is likely to be the physiological substrate. This is Octanoyltransferase from Sodalis glossinidius (strain morsitans).